The chain runs to 298 residues: Glutamyl-Q tRNA(Asp) synthetase (298 aa).

L-glutamate is bound by residues 12-16 (RFAPT) and glutamate 48. Residues 15-25 (PTPSGYLHFGS) carry the 'HIGH' region motif. The Zn(2+) site is built by cysteine 104, cysteine 106, tyrosine 118, and cysteine 122. 2 residues coordinate L-glutamate: tyrosine 175 and arginine 193. The 'KMSKS' region signature appears at 231–235 (KLGKS). ATP is bound at residue lysine 234.

Belongs to the class-I aminoacyl-tRNA synthetase family. GluQ subfamily. The cofactor is Zn(2+).

Functionally, catalyzes the tRNA-independent activation of glutamate in presence of ATP and the subsequent transfer of glutamate onto a tRNA(Asp). Glutamate is transferred on the 2-amino-5-(4,5-dihydroxy-2-cyclopenten-1-yl) moiety of the queuosine in the wobble position of the QUC anticodon. In Pseudomonas fluorescens (strain ATCC BAA-477 / NRRL B-23932 / Pf-5), this protein is Glutamyl-Q tRNA(Asp) synthetase.